The primary structure comprises 4621 residues: Dynein axonemal heavy chain 5 (4621 aa).

The stem stretch occupies residues 1–1938 (MFRIGRRQLW…MIHITDVAFI (1938 aa)). Coiled-coil stretches lie at residues 260–305 (WIKQ…DQLK) and 803–825 (LENA…DLIE). Positions 901–921 (VCHENASPSGNTSGRREGHSE) are disordered. Coiled coils occupy residues 1065-1094 (AVKN…SINL) and 1433-1462 (DVNI…DWQA). 4 AAA regions span residues 1939-2161 (YQNE…VLRT), 2221-2440 (TAIS…IQNL), 2547-2800 (VYPP…IWQG), and 2913-3167 (LYNE…FRRS). ATP contacts are provided by residues 1977–1984 (GPAGTGKT) and 2259–2266 (GPSGSGKT). The stalk stretch occupies residues 3182–3479 (YKFIYEEKHM…QTLLEDADRC (298 aa)). Coiled coils occupy residues 3186 to 3299 (YEEK…QTIK), 3423 to 3490 (LKAN…STLI), and 3729 to 3814 (ILTE…EEYR). AAA stretches follow at residues 3564-3794 (LIDA…EVTQ) and 4009-4223 (ARKY…FIQN). Residues 4389-4417 (FLRQEIDRMQRVLSLVRSTLTELKLAVDG) adopt a coiled-coil conformation.

This sequence belongs to the dynein heavy chain family. In terms of assembly, interacts with DNAL1. Consists of at least two heavy chains and a number of intermediate and light chains. As to expression, strongly expressed in lung and kidney and weaker expression seen in brain, heart and testis. In the brain, expressed in ependymal cells lining the brain ventricles and the aqueduct.

It localises to the cytoplasm. It is found in the cytoskeleton. The protein resides in the cilium axoneme. Its function is as follows. Force generating protein of respiratory cilia. Produces force towards the minus ends of microtubules. Dynein has ATPase activity; the force-producing power stroke is thought to occur on release of ADP. Required for structural and functional integrity of the cilia of ependymal cells lining the brain ventricles. This chain is Dynein axonemal heavy chain 5, found in Mus musculus (Mouse).